Reading from the N-terminus, the 81-residue chain is Elongation factor 1-beta (81 aa).

The protein belongs to the EF-1-beta/EF-1-delta family.

Functionally, promotes the exchange of GDP for GTP in EF-1-alpha/GDP, thus allowing the regeneration of EF-1-alpha/GTP that could then be used to form the ternary complex EF-1-alpha/GTP/AAtRNA. In Nanoarchaeum equitans (strain Kin4-M), this protein is Elongation factor 1-beta.